The following is a 232-amino-acid chain: 2-C-methyl-D-erythritol 4-phosphate cytidylyltransferase (232 aa).

This sequence belongs to the IspD/TarI cytidylyltransferase family. IspD subfamily.

It carries out the reaction 2-C-methyl-D-erythritol 4-phosphate + CTP + H(+) = 4-CDP-2-C-methyl-D-erythritol + diphosphate. It functions in the pathway isoprenoid biosynthesis; isopentenyl diphosphate biosynthesis via DXP pathway; isopentenyl diphosphate from 1-deoxy-D-xylulose 5-phosphate: step 2/6. Its function is as follows. Catalyzes the formation of 4-diphosphocytidyl-2-C-methyl-D-erythritol from CTP and 2-C-methyl-D-erythritol 4-phosphate (MEP). This Vibrio cholerae serotype O1 (strain ATCC 39315 / El Tor Inaba N16961) protein is 2-C-methyl-D-erythritol 4-phosphate cytidylyltransferase.